Reading from the N-terminus, the 350-residue chain is m7GpppX diphosphatase (350 aa).

Ser-2 bears the N-acetylserine mark. Ser-60 carries the post-translational modification Phosphoserine. A Phosphothreonine modification is found at Thr-66. Residue Thr-66 is modified to Phosphothreonine; by YAK1. Phosphotyrosine is present on Tyr-70. At Thr-120 the chain carries Phosphothreonine. Residues Glu-171, Lys-196, and 259 to 270 (HYQPSYYHFHIH) each bind substrate. The short motif at 266-270 (HFHIH) is the Histidine triad motif element. His-268 acts as the Nucleophile in catalysis.

Belongs to the HIT family. Homodimer. Forms heterodimer with DCS2; the interaction inhibits the DCS1 scavenger decapping activity during post-diauxic growth. Post-translationally, phosphorylated. Phosphorylation occurs upon glucose deprivation.

Its subcellular location is the cytoplasm. It is found in the perinuclear region. The protein resides in the P-body. The catalysed reaction is a 5'-end (N(7)-methyl 5'-triphosphoguanosine)-ribonucleoside in mRNA + H2O = N(7)-methyl-GMP + a 5'-end diphospho-ribonucleoside in mRNA + 2 H(+). The hydrolytic product 7-methylguanosine diphosphate (m7GDP) efficiently inhibits the decapping scavenger activity and acts as a competitive inhibitor in vitro. In terms of biological role, decapping scavenger enzyme that catalyzes the cleavage of a residual cap structure following the degradation of mRNAs by the 3'-&gt;5' exosome-mediated mRNA decay pathway. Hydrolyzes cap analog structures like 7-methylguanosine nucleoside triphosphate (m7GpppG) and tri-methyl guanosine nucleoside triphosphate (m3(2,2,7)GpppG) with up to 10 nucleotide substrates (small capped oligoribonucleotides) and specifically releases 5'-phosphorylated RNA fragments and 7-methylguanosine monophosphate (m7GMP) or tri-methyl guanosine nucleoside monophosphate (m3(2,2,7)GMP), respectively. Does not hydrolyze unmethylated cap analog (GpppG) and shows no decapping activity on intact m7GpppG-capped mRNA molecules longer than 25 nucleotides. Does not hydrolyze 7-methylguanosine diphosphate (m7GDP) and tri-methylguanosine diphosphate (m3(2,2,7)GDP) to (m(7)GMP) and m3(2,2,7)GMP, respectively. May also play a role in the 5'-&gt;3 mRNA decay pathway; m7GDP, the downstream product released by the 5'-&gt;3' mRNA mediated decapping activity, may be also converted by DCS1 to m7GMP. Binds to m7GpppG and strongly to m7GDP. May also regulate the 5'-&gt;3' exoribonucleolytic mRNA decay pathway in a cap-independent manner. Negatively regulates trehalase activity. This chain is m7GpppX diphosphatase, found in Saccharomyces cerevisiae (strain ATCC 204508 / S288c) (Baker's yeast).